Here is a 285-residue protein sequence, read N- to C-terminus: Vacuolar protein sorting-associated protein 37B (285 aa).

The interval 50-170 (ASNRSLAEGN…EMVLKGQRLP (121 aa)) is interaction with IST1. The region spanning 84–173 (FEAYQIKKTK…LKGQRLPQAL (90 aa)) is the VPS37 C-terminal domain. Residues 175–201 (PLPPRLPELAPTAPLPYPAPEASGPPA) form a disordered region. Position 218 is an omega-N-methylarginine (Arg218). A disordered region spans residues 230-285 (GQAVPYPGLQCPPLPPRVGLPTQQGFSSQFVSPYPPPLPQRPPPRLPPHQPGFILQ). Over residues 250-260 (PTQQGFSSQFV) the composition is skewed to polar residues. Pro residues predominate over residues 262–279 (PYPPPLPQRPPPRLPPHQ).

The protein belongs to the VPS37 family. Component of the ESCRT-I complex (endosomal sorting complex required for transport I) which consists of TSG101, VPS28, a VPS37 protein (VPS37A to -D) and MVB12A or MVB12B in a 1:1:1:1 stoichiometry. Interacts with TSG101, VPS28, MVB12A and MVB12B. Component of the ESCRT-I complex (endosomal sorting complex required for transport I) which consists of TSG101, VPS28, a VPS37 protein (VPS37A to -D) and UBAP1 in a 1:1:1:1 stoichiometry. Interacts with CEP55. Interacts with IST1. Widely expressed. Expressed in macrophages and lymphocytes.

The protein localises to the late endosome membrane. Its function is as follows. Component of the ESCRT-I complex, a regulator of vesicular trafficking process. Required for the sorting of endocytic ubiquitinated cargos into multivesicular bodies. May be involved in cell growth and differentiation. The protein is Vacuolar protein sorting-associated protein 37B (VPS37B) of Homo sapiens (Human).